A 31-amino-acid chain; its full sequence is Beta-endorphin (31 aa).

It belongs to the POMC family.

The protein resides in the secreted. Its function is as follows. Beta-endorphin and Met-enkephalin are endogenous opiates. In Camelus dromedarius (Dromedary), this protein is Beta-endorphin (POMC).